The following is a 139-amino-acid chain: D-ribose pyranase (139 aa).

Catalysis depends on His-20, which acts as the Proton donor. Residues Asp-28, His-106, and 128–130 each bind substrate; that span reads YAN.

The protein belongs to the RbsD / FucU family. RbsD subfamily. In terms of assembly, homodecamer.

It localises to the cytoplasm. It carries out the reaction beta-D-ribopyranose = beta-D-ribofuranose. It participates in carbohydrate metabolism; D-ribose degradation; D-ribose 5-phosphate from beta-D-ribopyranose: step 1/2. Its function is as follows. Catalyzes the interconversion of beta-pyran and beta-furan forms of D-ribose. In Maridesulfovibrio salexigens (strain ATCC 14822 / DSM 2638 / NCIMB 8403 / VKM B-1763) (Desulfovibrio salexigens), this protein is D-ribose pyranase.